Here is a 796-residue protein sequence, read N- to C-terminus: Kinesin-like protein KIF3C (796 aa).

In terms of domain architecture, Kinesin motor spans alanine 10–isoleucine 367. Glycine 97–threonine 104 is an ATP binding site. Disordered stretches follow at residues arginine 252–alanine 292, glutamate 397–glycine 422, and lysine 758–aspartate 796. Over residues alanine 256–threonine 269 the composition is skewed to low complexity. A coiled-coil region spans residues lysine 378 to lysine 632. Basic residues predominate over residues methionine 401–alanine 416. The interval tyrosine 633 to valine 793 is globular.

Belongs to the TRAFAC class myosin-kinesin ATPase superfamily. Kinesin family. Kinesin II subfamily. As to quaternary structure, heterodimer of KIF3A and KIF3C.

The protein resides in the cytoplasm. The protein localises to the cytoskeleton. In terms of biological role, microtubule-based anterograde translocator for membranous organelles. This is Kinesin-like protein KIF3C (Kif3c) from Mus musculus (Mouse).